The primary structure comprises 95 residues: RING finger protein Z (95 aa).

Glycine 2 carries N-myristoyl glycine; by host lipidation. The segment at 38 to 74 (CKSCWFANKGLIKCSNHYLCLKCLTAMLSRSDYCGIC) adopts an RING-type; atypical zinc-finger fold. Residues 88-91 (PSAP) carry the PTAP/PSAP motif motif.

Belongs to the arenaviridae Z protein family. In terms of assembly, interacts with protein NP; this interaction probably directs the encapsidated genome to budding sites. Interacts (via RING domain) with polymerase L; this interaction inhibits viral transcription and replication, Z partially blocks the product exit tunnel for the releasing nascent RNA product. Interacts with the glycoprotein complex; this interaction plays a role in virion budding. Interacts with host eIF4E; this interaction results in eIF4E reduced affinity for its substrate, the 5'-m7 G cap structure. Interacts (via late-budding domain) with host TSG101; this interaction is essential for budding and release of viral particles. Interacts with host RPLP0; this interaction may serve to load ribosome-like particles inside the virion. Interacts with host PML; this interaction induces PML bodies redistribution in the cytoplasm upon viral infection. Myristoylation is required for the role of RING finger protein Z in assembly and budding.

The protein resides in the virion. It localises to the host cytoplasm. The protein localises to the host perinuclear region. It is found in the host cell membrane. Its function is as follows. Plays a crucial role in virion assembly and budding. Expressed late in the virus life cycle, it acts as an inhibitor of viral transcription and RNA synthesis by interacting with the viral polymerase L. Presumably recruits the NP encapsidated genome to cellular membranes at budding sites via direct interaction with NP. Plays critical roles in the final steps of viral release by interacting with host TSG101, a member of the vacuolar protein-sorting pathway and using other cellular host proteins involved in vesicle formation pathway. The budding of the virus progeny occurs after association of protein Z with the viral glycoprotein complex SSP-GP1-GP2 at the cell periphery, step that requires myristoylation of protein Z. Also selectively represses protein production by associating with host eIF4E. In cell-based minigenome assay, has an inhibitory effect on the ribonucleoprotein machinery (vRNP), which is responsible for the replication and transcription of the viral genome. The chain is RING finger protein Z from Bear Canyon mammarenavirus (isolate Mouse/United States/AV A0070039/2000) (BCNV).